Here is a 20-residue protein sequence, read N- to C-terminus: Agglutinin beta-2 chain (20 aa).

Positions 1–20 (GRNGKSQSIIVGPWGDRVTN) are disordered.

This sequence belongs to the jacalin lectin family. In terms of assembly, formed of four alpha chains and four beta chains.

Its function is as follows. D-galactose-specific lectin, binds the T-antigen structure Gal-beta1,3-GalNAc. The protein is Agglutinin beta-2 chain of Maclura pomifera (Osage orange).